The primary structure comprises 514 residues: MSHNAPLVLMILDGWGYNENDRYNAIAKANTPQWDEWWQTCPHILLKASGLPVGLPDEQMGNSEVGHMHIGAGRVIQQDFTRINEAINNGKFAKNAVFHEVIDQLKKTEKSLHIMGLLSPGGVHSHEQHLFALLALCNQKKFRSVHLHLFLDGRDTPPQSALDSLKCLNEELAKHPVATINSICGRYYAMDRDKRWERVEPVYNLLTQGKSERQFPDAETAIHFYYKNKISDEFVPPTLIGKEHSIQDGDAVLFFNFRADRARQLTSTFLDPSFKGFERKTLPKLSYFVSMTQYDKNLLTTTAFPPVPLNNTLGEVLSSHGLSQLRIAETEKYAHVTFFFNGGCESVFTNEERIMVPSPQVATYDLQPEMSAHELTKTLIAAINSQDYHVIICNYANADMVGHTGNFEATVQAIECLDQCMQQVWQALKNNGGKLLITADHGNAEEMFSEATNQAHTAHTSEPVPFLYVGGGWHFTHSEGSLIDIAPSLLALLGITPPPEMTGRILLEKNHAHP.

Mn(2+)-binding residues include Asp13 and Ser63. Catalysis depends on Ser63, which acts as the Phosphoserine intermediate. Residues His124, 154 to 155, Arg186, Arg192, 258 to 261, and Lys332 contribute to the substrate site; these read RD and RADR. 5 residues coordinate Mn(2+): Asp399, His403, Asp440, His441, and His459.

The protein belongs to the BPG-independent phosphoglycerate mutase family. Monomer. Mn(2+) is required as a cofactor.

The enzyme catalyses (2R)-2-phosphoglycerate = (2R)-3-phosphoglycerate. It participates in carbohydrate degradation; glycolysis; pyruvate from D-glyceraldehyde 3-phosphate: step 3/5. Its function is as follows. Catalyzes the interconversion of 2-phosphoglycerate and 3-phosphoglycerate. The sequence is that of 2,3-bisphosphoglycerate-independent phosphoglycerate mutase from Legionella pneumophila subsp. pneumophila (strain Philadelphia 1 / ATCC 33152 / DSM 7513).